Consider the following 151-residue polypeptide: 3-dehydroquinate dehydratase (151 aa).

Y26 (proton acceptor) is an active-site residue. Substrate contacts are provided by N75, H81, and D88. The Proton donor role is filled by H101. Residues 102–103 and R112 contribute to the substrate site; that span reads LS.

It belongs to the type-II 3-dehydroquinase family. In terms of assembly, homododecamer.

The enzyme catalyses 3-dehydroquinate = 3-dehydroshikimate + H2O. It participates in metabolic intermediate biosynthesis; chorismate biosynthesis; chorismate from D-erythrose 4-phosphate and phosphoenolpyruvate: step 3/7. Catalyzes a trans-dehydration via an enolate intermediate. This Shewanella sediminis (strain HAW-EB3) protein is 3-dehydroquinate dehydratase.